The following is a 152-amino-acid chain: Transcriptional regulator MraZ (152 aa).

SpoVT-AbrB domains lie at 5–52 (ATLV…TLPE) and 81–124 (ASEC…DETT).

This sequence belongs to the MraZ family. In terms of assembly, forms oligomers.

It localises to the cytoplasm. The protein resides in the nucleoid. In terms of biological role, negatively regulates its own expression and that of the subsequent genes in the proximal part of the division and cell wall (dcw) gene cluster. Acts by binding directly to DNA. May also regulate the expression of genes outside the dcw cluster. The sequence is that of Transcriptional regulator MraZ from Enterobacter sp. (strain 638).